A 61-amino-acid polypeptide reads, in one-letter code: Delta-actitoxin-Avd2c (61 aa).

A signal peptide spans 1-20; sequence MMNRLLVFLMLGAFMLVVSA. Positions 21-31 are excised as a propeptide; the sequence is NDAYGGDESLG. 3 disulfides stabilise this stretch: Cys36–Cys51, Cys37–Cys45, and Cys39–Cys56.

The protein belongs to the sea anemone short toxin (type III) family.

The protein localises to the secreted. The protein resides in the nematocyst. Functionally, sodium channel inhibitor. 5 uM completely inhibits voltage-gated sodium channel (Nav) inactivation. This is Delta-actitoxin-Avd2c from Anemonia viridis (Snakelocks anemone).